The sequence spans 117 residues: Transcription elongation factor SPT4 (117 aa).

Residue A2 is modified to N-acetylalanine. Residues 2–40 (ALETVPKDLRHLRACLLCSLVKTIDQFEYDGCDNCDAYL) form an interaction with SUPT5H region. 4 residues coordinate Zn(2+): C16, C19, C33, and C36. Residues 16 to 36 (CLLCSLVKTIDQFEYDGCDNC) form a C4-type zinc finger.

The protein belongs to the SPT4 family. As to quaternary structure, interacts with SUPT5H to form DSIF. DSIF interacts with the positive transcription elongation factor b complex (P-TEFb complex), which is composed of CDK9 and cyclin-T (CCNT1 or CCNT2). DSIF interacts with RNA polymerase II, and this interaction is reduced by phosphorylation of the C-terminal domain (CTD) of POLR2A by P-TEFb. DSIF also interacts with the NELF complex, which is composed of NELFA, NELFB, NELFD and NELFE, and this interaction occurs following prior binding of DSIF to RNA polymerase II. DSIF also interacts with PRMT1/HRMT1L2, TATSF1, RNGTT/CAP1A, PRMT5/SKB1, SUPT6H, and can interact with PIN1. In terms of processing, ubiquitinated by UBR5 when not assembled in the DSIF complex, leading to its degradation: UBR5 recognizes and binds a degron that is not accessible when SUPT4H1 is part of the DSIF complex.

It localises to the nucleus. Functionally, component of the DRB sensitivity-inducing factor complex (DSIF complex), which regulates mRNA processing and transcription elongation by RNA polymerase II. DSIF positively regulates mRNA capping by stimulating the mRNA guanylyltransferase activity of RNGTT/CAP1A. DSIF also acts cooperatively with the negative elongation factor complex (NELF complex) to enhance transcriptional pausing at sites proximal to the promoter. Transcriptional pausing may facilitate the assembly of an elongation competent RNA polymerase II complex. DSIF and NELF promote pausing by inhibition of the transcription elongation factor TFIIS/S-II. TFIIS/S-II binds to RNA polymerase II at transcription pause sites and stimulates the weak intrinsic nuclease activity of the enzyme. Cleavage of blocked transcripts by RNA polymerase II promotes the resumption of transcription from the new 3' terminus and may allow repeated attempts at transcription through natural pause sites. The sequence is that of Transcription elongation factor SPT4 (SUPT4H1) from Pongo abelii (Sumatran orangutan).